A 117-amino-acid chain; its full sequence is Large ribosomal subunit protein uL24 (117 aa).

Basic residues predominate over residues methionine 1–lysine 10. The disordered stretch occupies residues methionine 1 to leucine 28.

This sequence belongs to the universal ribosomal protein uL24 family. In terms of assembly, part of the 50S ribosomal subunit.

Functionally, one of two assembly initiator proteins, it binds directly to the 5'-end of the 23S rRNA, where it nucleates assembly of the 50S subunit. In terms of biological role, located at the polypeptide exit tunnel on the outside of the subunit. In Methanobrevibacter smithii (strain ATCC 35061 / DSM 861 / OCM 144 / PS), this protein is Large ribosomal subunit protein uL24.